Consider the following 142-residue polypeptide: Large ribosomal subunit protein uL11 (142 aa).

Belongs to the universal ribosomal protein uL11 family. Part of the ribosomal stalk of the 50S ribosomal subunit. Interacts with L10 and the large rRNA to form the base of the stalk. L10 forms an elongated spine to which L12 dimers bind in a sequential fashion forming a multimeric L10(L12)X complex. One or more lysine residues are methylated.

Its function is as follows. Forms part of the ribosomal stalk which helps the ribosome interact with GTP-bound translation factors. This is Large ribosomal subunit protein uL11 from Leptospira borgpetersenii serovar Hardjo-bovis (strain JB197).